A 64-amino-acid polypeptide reads, in one-letter code: Myotoxin-2 (64 aa).

Residues Lys-1–Ala-21 form the signal peptide. A disulfide bridge links Cys-32 with Cys-51.

The protein belongs to the crotamine-myotoxin family. In terms of assembly, monomer. In terms of tissue distribution, expressed by the venom gland.

The protein resides in the secreted. Cationic peptide that possesses multiple functions. It acts as a cell-penetrating peptide (CPP), and as a potent voltage-gated potassium channel (Kv) inhibitor. It exhibits antimicrobial activities, hind limb paralysis, and severe muscle necrosis by a non-enzymatic mechanism. The polypeptide is Myotoxin-2 (Crotalus durissus terrificus (South American rattlesnake)).